The sequence spans 324 residues: Galactosylgalactosylxylosylprotein 3-beta-glucuronosyltransferase 2 (324 aa).

Topologically, residues 1 to 2 (MK) are cytoplasmic. A helical; Signal-anchor for type II membrane protein transmembrane segment spans residues 3 to 23 (SALCSRFFILLPWILIVIIML). At 24-324 (DVDPRRPAPQ…YHLDTVNIEV (301 aa)) the chain is on the lumenal side. A disordered region spans residues 50-78 (SRVPLRRSSPGRDAAEKRNESRPQLQPEP). Asparagine 68 carries an N-linked (GlcNAc...) asparagine glycan. Residues 88-90 (PTY), aspartate 119, arginine 156, arginine 161, and 186-188 (DDD) each bind UDP-alpha-D-glucuronate. Aspartate 188 lines the Mn(2+) pocket. Residues 235–244 (WREDRPFAID) form an interaction with galactose moiety of substrate glycoprotein region. Glutamate 274 acts as the Proton donor/acceptor in catalysis. Asparagine 293 carries an N-linked (GlcNAc...) asparagine glycan. 301–303 (HTR) contributes to the UDP-alpha-D-glucuronate binding site.

Belongs to the glycosyltransferase 43 family. As to quaternary structure, homodimer. Mn(2+) is required as a cofactor. In terms of tissue distribution, expressed in brain, but not in liver and kidney.

The protein localises to the golgi apparatus membrane. The enzyme catalyses 3-O-(beta-D-galactosyl-(1-&gt;3)-beta-D-galactosyl-(1-&gt;4)-beta-D-xylosyl)-L-seryl-[protein] + UDP-alpha-D-glucuronate = 3-O-(beta-D-GlcA-(1-&gt;3)-beta-D-Gal-(1-&gt;3)-beta-D-Gal-(1-&gt;4)-beta-D-Xyl)-L-seryl-[protein] + UDP + H(+). The protein operates within protein modification; protein glycosylation. Its function is as follows. Involved in the biosynthesis of L2/HNK-1 carbohydrate epitope on both glycolipids and glycoproteins. The chain is Galactosylgalactosylxylosylprotein 3-beta-glucuronosyltransferase 2 (B3gat2) from Mus musculus (Mouse).